Here is a 298-residue protein sequence, read N- to C-terminus: 5'-AMP-activated protein kinase subunit beta (298 aa).

The tract at residues Met-1–Cys-98 is disordered. Over residues Gln-19–Asn-30 the composition is skewed to polar residues. Positions Leu-48–Gln-59 are enriched in acidic residues. Polar residues predominate over residues Gln-60–Gly-77. A compositionally biased stretch (basic residues) spans His-78–His-91. Asp-250–Ser-252 is an ADP binding site.

This sequence belongs to the 5'-AMP-activated protein kinase beta subunit family. AMPK is a heterotrimer of an alpha catalytic subunit (ssp2), a beta (amk2) and a gamma non-catalytic subunits (cbs2). The beta subunit serves as a bridge between the catalytic and the regulatory subunit.

It is found in the cytoplasm. In terms of biological role, beta subunit of AMP-activated protein kinase (AMPK), which is required for transcriptional, metabolic, and developmental adaptations in response to glucose limitation. Has a structural role, mediating heterotrimer formation, and a regulatory role, defining carbon source-regulated subcellular location and substrate specificity of the AMPK kinase complex. This Schizosaccharomyces pombe (strain 972 / ATCC 24843) (Fission yeast) protein is 5'-AMP-activated protein kinase subunit beta (amk2).